The chain runs to 711 residues: GDNF-inducible zinc finger protein 1 (711 aa).

In terms of domain architecture, BTB spans 31–103 (CDVTVSVEYQ…VYTAKVQVEE (73 aa)). Positions 153-168 (SGSQVSAAPAPRASVA) are enriched in low complexity. 2 disordered regions span residues 153-220 (SGSQ…PKIR) and 243-312 (RLRE…EGEK). 3 stretches are compositionally biased toward basic and acidic residues: residues 197–212 (PPKK…KEVV), 243–252 (RLREQQKTAE), and 265–277 (SPDR…EQVS). A compositionally biased stretch (acidic residues) spans 298–309 (EEEEEEEEEDEE). 10 consecutive C2H2-type zinc fingers follow at residues 317-340 (FKCS…KHRH), 348-371 (YRCD…RHVH), 377-400 (FPCE…LQVH), 407-429 (HRCG…ERTH), 435-457 (YGCT…MRIH), 463-485 (FVCD…KRCH), 491-513 (FMCE…NRIH), 519-541 (FKCE…IKVH), 547-569 (YCCD…RRIH), and 575-597 (FMCN…TSIH). At Ser613 the chain carries Phosphoserine.

This sequence belongs to the krueppel C2H2-type zinc-finger protein family. In terms of assembly, interacts with NCL. In terms of tissue distribution, expressed in adult brain, heart, skeletal muscle, kidney and liver. Also detected in fetal brain and kidney, and at lower levels in fetal lung and liver.

It localises to the cytoplasm. Its subcellular location is the nucleus. It is found in the nucleoplasm. The protein resides in the nucleolus. Transcriptional repressor that binds the GZF1 responsive element (GRE) (consensus: 5'-TGCGCN[TG][CA]TATA-3'). May be regulating VSX2/HOX10 expression. The polypeptide is GDNF-inducible zinc finger protein 1 (Homo sapiens (Human)).